We begin with the raw amino-acid sequence, 205 residues long: High frequency lysogenization protein HflD homolog (205 aa).

Belongs to the HflD family.

It is found in the cytoplasm. It localises to the cell inner membrane. This is High frequency lysogenization protein HflD homolog from Shewanella sp. (strain W3-18-1).